A 341-amino-acid chain; its full sequence is MPTSVMNLPIDMTTMSSQERLEKMSQLPKIELMEEEEEEEMKPSSDNKIKFNISELLEDDRKPTTQSSPSASSEDSTNEIEQTAFNFNFDPKMNPISALLQLQQTFLNVGNQQNMISPLTMFPFFGLPTAQLMHFKNMSNPDVNIQSDNGEEKDEKSEGKDGETRDSTGGSPLESDAEDDDDIGRGSDDEANSSDPSQNRKKKTRTVFSRSQVSQLEMMFECKRYLSSQERSNLAQKLHLTETQVKIWFQNRRNKFKRQAQTDDTNISLQMHRANVFSIPATTALTSPILTIPTTSAGVNMRNMISSPMDASATAAARFLFGFGTLQAQQNLNASAQAQNM.

2 disordered regions span residues 1-78 (MPTS…DSTN) and 139-209 (SNPD…TVFS). Positions 64-78 (TTQSSPSASSEDSTN) are enriched in polar residues. The segment covering 153-166 (KDEKSEGKDGETRD) has biased composition (basic and acidic residues). The homeobox DNA-binding region spans 201–260 (KKKTRTVFSRSQVSQLEMMFECKRYLSSQERSNLAQKLHLTETQVKIWFQNRRNKFKRQA).

The protein belongs to the HMX homeobox family. As to expression, expressed in a subset of head neurons, including AIM and ASK (at protein level).

The protein resides in the nucleus. In terms of biological role, transcription factor that binds to the promoter of target genes. Regulates fate specification and/or differentiation of multiple cell types arising from the embryonic mesodermal (M) lineage and the ABp(l/r)paa precursors. In the postembryonic M lineage, regulates cleavage orientation, cell proliferation and cell fate specification. Regulates hlh-1 expression to specify coelomocyte fate in the mesodermal (M) lineage. In AWC neurons, initiates expression of ceh-36, leading to the expression of terminal differentiation genes. Regulates ventral cephalic sheath (CEPsh) glia differentiation and expression of transcription factor hlh-17 in CEPsh glia. Promotes terminal differentiation and morphogenesis of the epithelial duct and pore cells. In the duct cell, cooperates with the EGF-Ras-ERK pathway in turning on the terminal differentiation gene lin-48. In Caenorhabditis elegans, this protein is Homeobox protein mls-2.